A 387-amino-acid polypeptide reads, in one-letter code: Carbamoyl phosphate synthase small chain (387 aa).

The interval 1 to 196 is CPSase; the sequence is MEGVLSQLAV…FSINKQKFLF (196 aa). 3 residues coordinate L-glutamine: S51, G245, and G247. The 188-residue stretch at 197–384 folds into the Glutamine amidotransferase type-1 domain; the sequence is HVVVYDFGVK…IKLIVSQKTT (188 aa). C273 serves as the catalytic Nucleophile. Residues L274, Q277, N315, and F318 each contribute to the L-glutamine site. Residues H357 and E359 contribute to the active site.

Belongs to the CarA family. As to quaternary structure, composed of two chains; the small (or glutamine) chain promotes the hydrolysis of glutamine to ammonia, which is used by the large (or ammonia) chain to synthesize carbamoyl phosphate. Tetramer of heterodimers (alpha,beta)4.

The catalysed reaction is hydrogencarbonate + L-glutamine + 2 ATP + H2O = carbamoyl phosphate + L-glutamate + 2 ADP + phosphate + 2 H(+). The enzyme catalyses L-glutamine + H2O = L-glutamate + NH4(+). Its pathway is amino-acid biosynthesis; L-arginine biosynthesis; carbamoyl phosphate from bicarbonate: step 1/1. It functions in the pathway pyrimidine metabolism; UMP biosynthesis via de novo pathway; (S)-dihydroorotate from bicarbonate: step 1/3. Small subunit of the glutamine-dependent carbamoyl phosphate synthetase (CPSase). CPSase catalyzes the formation of carbamoyl phosphate from the ammonia moiety of glutamine, carbonate, and phosphate donated by ATP, constituting the first step of 2 biosynthetic pathways, one leading to arginine and/or urea and the other to pyrimidine nucleotides. The small subunit (glutamine amidotransferase) binds and cleaves glutamine to supply the large subunit with the substrate ammonia. The protein is Carbamoyl phosphate synthase small chain of Buchnera aphidicola subsp. Acyrthosiphon pisum (strain APS) (Acyrthosiphon pisum symbiotic bacterium).